The primary structure comprises 447 residues: Argininosuccinate synthase (447 aa).

Residues 17 to 25 (AFSGGLDTS) and alanine 43 contribute to the ATP site. Tyrosine 99 provides a ligand contact to L-citrulline. 2 residues coordinate ATP: glycine 129 and threonine 131. L-aspartate is bound by residues threonine 131, asparagine 135, and aspartate 136. L-citrulline is bound at residue asparagine 135. Aspartate 136 provides a ligand contact to ATP. 2 residues coordinate L-citrulline: arginine 139 and serine 192. Aspartate 194 contacts ATP. The L-citrulline site is built by threonine 201, glutamate 203, and glutamate 280.

The protein belongs to the argininosuccinate synthase family. Type 2 subfamily. As to quaternary structure, homotetramer.

It localises to the cytoplasm. It carries out the reaction L-citrulline + L-aspartate + ATP = 2-(N(omega)-L-arginino)succinate + AMP + diphosphate + H(+). The protein operates within amino-acid biosynthesis; L-arginine biosynthesis; L-arginine from L-ornithine and carbamoyl phosphate: step 2/3. The protein is Argininosuccinate synthase of Citrobacter koseri (strain ATCC BAA-895 / CDC 4225-83 / SGSC4696).